The primary structure comprises 753 residues: 5-methyltetrahydropteroyltriglutamate--homocysteine methyltransferase (753 aa).

Residues R17–K20 and K117 contribute to the 5-methyltetrahydropteroyltri-L-glutamate site. L-homocysteine-binding positions include I431–S433 and E484. L-methionine contacts are provided by residues I431–S433 and E484. Residues R515–C516 and W561 each bind 5-methyltetrahydropteroyltri-L-glutamate. D599 lines the L-homocysteine pocket. D599 contacts L-methionine. E605 lines the 5-methyltetrahydropteroyltri-L-glutamate pocket. H641, C643, and E665 together coordinate Zn(2+). Residue H694 is the Proton donor of the active site. Zn(2+) is bound at residue C726.

It belongs to the vitamin-B12 independent methionine synthase family. It depends on Zn(2+) as a cofactor.

It catalyses the reaction 5-methyltetrahydropteroyltri-L-glutamate + L-homocysteine = tetrahydropteroyltri-L-glutamate + L-methionine. The protein operates within amino-acid biosynthesis; L-methionine biosynthesis via de novo pathway; L-methionine from L-homocysteine (MetE route): step 1/1. In terms of biological role, catalyzes the transfer of a methyl group from 5-methyltetrahydrofolate to homocysteine resulting in methionine formation. This Shigella boydii serotype 18 (strain CDC 3083-94 / BS512) protein is 5-methyltetrahydropteroyltriglutamate--homocysteine methyltransferase.